Consider the following 500-residue polypeptide: Probable cytosol aminopeptidase (500 aa).

The Mn(2+) site is built by lysine 265 and aspartate 270. Lysine 277 is an active-site residue. 3 residues coordinate Mn(2+): aspartate 288, aspartate 347, and glutamate 349. Residue arginine 351 is part of the active site.

The protein belongs to the peptidase M17 family. It depends on Mn(2+) as a cofactor.

It is found in the cytoplasm. The catalysed reaction is Release of an N-terminal amino acid, Xaa-|-Yaa-, in which Xaa is preferably Leu, but may be other amino acids including Pro although not Arg or Lys, and Yaa may be Pro. Amino acid amides and methyl esters are also readily hydrolyzed, but rates on arylamides are exceedingly low.. It carries out the reaction Release of an N-terminal amino acid, preferentially leucine, but not glutamic or aspartic acids.. Presumably involved in the processing and regular turnover of intracellular proteins. Catalyzes the removal of unsubstituted N-terminal amino acids from various peptides. The polypeptide is Probable cytosol aminopeptidase (Rickettsia rickettsii (strain Iowa)).